A 220-amino-acid polypeptide reads, in one-letter code: Sec-independent protein translocase protein TatB (220 aa).

The helical transmembrane segment at Met1–Gly21 threads the bilayer. A disordered region spans residues Val190–Gln220.

Belongs to the TatB family. The Tat system comprises two distinct complexes: a TatABC complex, containing multiple copies of TatA, TatB and TatC subunits, and a separate TatA complex, containing only TatA subunits. Substrates initially bind to the TatABC complex, which probably triggers association of the separate TatA complex to form the active translocon.

It is found in the cell inner membrane. In terms of biological role, part of the twin-arginine translocation (Tat) system that transports large folded proteins containing a characteristic twin-arginine motif in their signal peptide across membranes. Together with TatC, TatB is part of a receptor directly interacting with Tat signal peptides. TatB may form an oligomeric binding site that transiently accommodates folded Tat precursor proteins before their translocation. In Yersinia pseudotuberculosis serotype I (strain IP32953), this protein is Sec-independent protein translocase protein TatB.